The chain runs to 2540 residues: Probable JmjC domain-containing histone demethylation protein 2C (2540 aa).

The span at Thr-278–Ile-309 shows a compositional bias: polar residues. Residues Thr-278–Leu-478 form a disordered region. Ser-317 and Ser-320 each carry phosphoserine. Positions Asp-323–Lys-342 are enriched in basic and acidic residues. Positions Gly-343–Arg-353 are enriched in basic residues. Positions Lys-354–Asn-371 are enriched in basic and acidic residues. A phosphoserine mark is found at Ser-373 and Ser-376. Low complexity predominate over residues Ser-373–Glu-382. 3 stretches are compositionally biased toward basic and acidic residues: residues Asn-383–Asn-403, Asn-410–Leu-427, and Gln-438–Val-452. The span at Ser-464–Leu-478 shows a compositional bias: polar residues. Phosphoserine is present on residues Ser-475 and Ser-501. Thr-505 bears the Phosphothreonine mark. Residues Ser-601, Ser-617, Ser-638, Ser-639, Ser-641, Ser-652, and Ser-943 each carry the phosphoserine modification. Positions Val-631–Val-656 are disordered. Disordered regions lie at residues Gly-1242–Asn-1263 and Asn-1614–Thr-1692. Residues Lys-1643 to Lys-1652 show a composition bias toward basic residues. Basic and acidic residues predominate over residues Lys-1653–Lys-1669. The C6-type zinc-finger motif lies at Cys-1846–Cys-1871. Polar residues predominate over residues Pro-1971–Glu-1991. The tract at residues Pro-1971 to Ser-2064 is disordered. Ser-1989 is modified (phosphoserine). Over residues Ala-2016 to Asp-2043 the composition is skewed to basic and acidic residues. The span at Ser-2045 to Ser-2064 shows a compositional bias: polar residues. Residues Leu-2066–Leu-2070 carry the LXXLL motif motif. Residues Lys-2132 and Lys-2136 each participate in a glycyl lysine isopeptide (Lys-Gly) (interchain with G-Cter in SUMO2) cross-link. A JmjC domain is found at Met-2274–Arg-2498. Fe cation contacts are provided by His-2336, Glu-2338, and His-2466.

Belongs to the JHDM2 histone demethylase family. As to quaternary structure, interacts specifically with the ligand-binding domain of the thyroid receptor (TR). Requires the presence of thyroid hormone for its interaction. Fe(2+) serves as cofactor.

It is found in the nucleus. Functionally, probable histone demethylase that specifically demethylates 'Lys-9' of histone H3, thereby playing a central role in histone code. Demethylation of Lys residue generates formaldehyde and succinate. May be involved in hormone-dependent transcriptional activation, by participating in recruitment to androgen-receptor target genes. The protein is Probable JmjC domain-containing histone demethylation protein 2C (JMJD1C) of Homo sapiens (Human).